Consider the following 1452-residue polypeptide: Receptor-type tyrosine-protein phosphatase mu (1452 aa).

The N-terminal stretch at 1–20 (MRTLGTCLVTLAGLLLTAAG) is a signal peptide. Residues 21-742 (ETFSGGCLFD…PEKQTDHTVK (722 aa)) are Extracellular-facing. The region spanning 22–184 (TFSGGCLFDE…VKVLGHPCTR (163 aa)) is the MAM domain. A disulfide bond links cysteine 27 and cysteine 36. Residues asparagine 72, asparagine 92, asparagine 131, and asparagine 249 are each glycosylated (N-linked (GlcNAc...) asparagine). 2 disulfide bridges follow: cysteine 96–cysteine 182 and cysteine 206–cysteine 260. Residues 186–277 (PHFLRIQNVE…VGISNYAELV (92 aa)) form the Ig-like C2-type domain. Fibronectin type-III domains follow at residues 284-379 (PIAP…CADP), 382-480 (GPRK…TDED), 481-587 (LPGA…SAPS), and 589-671 (PAYE…DSLQ). 8 N-linked (GlcNAc...) asparagine glycosylation sites follow: asparagine 406, asparagine 414, asparagine 454, asparagine 534, asparagine 544, asparagine 598, asparagine 651, and asparagine 681. The chain crosses the membrane as a helical span at residues 743–764 (IAGVIAGILLFVIIFLGVVLVM). The Cytoplasmic portion of the chain corresponds to 765 to 1452 (KKRKLAKKRK…EVALEYLNSG (688 aa)). Residue serine 821 is modified to Phosphoserine. Tyrosine-protein phosphatase domains follow at residues 900 to 1154 (FKEE…ILEA) and 1186 to 1448 (IKEE…ALEY). Substrate-binding positions include aspartate 1063, 1095 to 1101 (CSAGAGR), and glutamine 1139. Cysteine 1095 (phosphocysteine intermediate) is an active-site residue. The Phosphocysteine intermediate role is filled by cysteine 1389.

Belongs to the protein-tyrosine phosphatase family. Receptor class 2B subfamily. As to quaternary structure, homodimer. As to expression, most abundant in lung, less in brain and heart.

The protein localises to the cell membrane. The catalysed reaction is O-phospho-L-tyrosyl-[protein] + H2O = L-tyrosyl-[protein] + phosphate. Functionally, receptor protein-tyrosine phosphatase that mediates homotypic cell-cell interactions and plays a role in adipogenic differentiation via modulation of p120 catenin/CTNND1 phosphorylation. Promotes CTNND1 dephosphorylation and prevents its cytoplasmic localization where it inhibits SLC2A4 membrane trafficking. In turn, SLC2A4 is directed to the plasma membrane and performs its glucose transporter function. This Mus musculus (Mouse) protein is Receptor-type tyrosine-protein phosphatase mu (Ptprm).